The chain runs to 363 residues: Tetraacyldisaccharide 4'-kinase (363 aa).

Position 78–85 (78–85) interacts with ATP; it reads TVGGNGKT.

Belongs to the LpxK family.

The enzyme catalyses a lipid A disaccharide + ATP = a lipid IVA + ADP + H(+). Its pathway is glycolipid biosynthesis; lipid IV(A) biosynthesis; lipid IV(A) from (3R)-3-hydroxytetradecanoyl-[acyl-carrier-protein] and UDP-N-acetyl-alpha-D-glucosamine: step 6/6. Transfers the gamma-phosphate of ATP to the 4'-position of a tetraacyldisaccharide 1-phosphate intermediate (termed DS-1-P) to form tetraacyldisaccharide 1,4'-bis-phosphate (lipid IVA). The protein is Tetraacyldisaccharide 4'-kinase of Wigglesworthia glossinidia brevipalpis.